A 467-amino-acid chain; its full sequence is Coiled-coil domain-containing protein 174 (467 aa).

Disordered stretches follow at residues 47–76 (INKK…LEEQ) and 129–163 (GATR…SEEW). Basic and acidic residues predominate over residues 64–76 (RAEKDAEQKLEEQ). A coiled-coil region spans residues 64–99 (RAEKDAEQKLEEQKTLDKAREKLEEKAKLYEKMTKG). Positions 136–147 (IEEERDDDDKEE) are enriched in acidic residues. S198 is modified (phosphoserine). A coiled-coil region spans residues 268–310 (LEMLREQTTDQRIKRENIKEKRKAMLEARLAKLRQKKMKKSKE). Disordered stretches follow at residues 301–365 (RQKK…IREW) and 379–454 (KQSE…VTFQ). 2 stretches are compositionally biased toward basic and acidic residues: residues 349–365 (IQER…IREW) and 379–390 (KQSELRAERDPE). Over residues 406–415 (PMSSQPQSRP) the composition is skewed to polar residues. Over residues 423–446 (GHSSGQSQEPSSSHTSTPASESSP) the composition is skewed to low complexity.

It localises to the nucleus. Probably involved in neuronal development. The protein is Coiled-coil domain-containing protein 174 (Ccdc174) of Mus musculus (Mouse).